A 534-amino-acid polypeptide reads, in one-letter code: CTP synthase (534 aa).

An amidoligase domain region spans residues 1–267; the sequence is MTKYIFVTGG…DQIVCDHLKL (267 aa). CTP is bound at residue S13. Residue S13 participates in UTP binding. Residue 14–19 coordinates ATP; it reads SIGKGI. Residue Y54 participates in L-glutamine binding. Residue D71 participates in ATP binding. The Mg(2+) site is built by D71 and E141. Residues 148-150, 188-193, and K224 contribute to the CTP site; these read DIE and KTKPTQ. Residues 188-193 and K224 contribute to the UTP site; that span reads KTKPTQ. Residue 240-242 participates in ATP binding; it reads RDV. The 243-residue stretch at 292–534 folds into the Glutamine amidotransferase type-1 domain; the sequence is KIALVGKYVE…FVTAAIKNSN (243 aa). G354 provides a ligand contact to L-glutamine. The active-site Nucleophile; for glutamine hydrolysis is the C381. L-glutamine contacts are provided by residues 382–385, E405, and R463; that span reads LGMQ. Catalysis depends on residues H508 and E510.

The protein belongs to the CTP synthase family. Homotetramer.

It catalyses the reaction UTP + L-glutamine + ATP + H2O = CTP + L-glutamate + ADP + phosphate + 2 H(+). It carries out the reaction L-glutamine + H2O = L-glutamate + NH4(+). The enzyme catalyses UTP + NH4(+) + ATP = CTP + ADP + phosphate + 2 H(+). Its pathway is pyrimidine metabolism; CTP biosynthesis via de novo pathway; CTP from UDP: step 2/2. With respect to regulation, allosterically activated by GTP, when glutamine is the substrate; GTP has no effect on the reaction when ammonia is the substrate. The allosteric effector GTP functions by stabilizing the protein conformation that binds the tetrahedral intermediate(s) formed during glutamine hydrolysis. Inhibited by the product CTP, via allosteric rather than competitive inhibition. In terms of biological role, catalyzes the ATP-dependent amination of UTP to CTP with either L-glutamine or ammonia as the source of nitrogen. Regulates intracellular CTP levels through interactions with the four ribonucleotide triphosphates. The protein is CTP synthase of Streptococcus pyogenes serotype M18 (strain MGAS8232).